The primary structure comprises 544 residues: Glycoprotein gp100 (544 aa).

Positions 1 to 19 (MKNFILLVFLFLLVSNSLG) are cleaved as a signal peptide. At 20–489 (KSNKKDDQSP…SGGGGNKKLY (470 aa)) the chain is on the extracellular side. N-linked (GlcNAc...) asparagine glycosylation is present at asparagine 80. Residues 84-99 (EPQNNPIPTVSINPDQ) show a composition bias toward polar residues. Residues 84–215 (EPQNNPIPTV…TPTRPSSSVS (132 aa)) are disordered. Low complexity-rich tracts occupy residues 126–142 (SKPT…TIPP), 150–165 (PQTT…TPTP), and 189–199 (PKPTKSSKPTK). Residues asparagine 224, asparagine 308, asparagine 332, asparagine 366, asparagine 380, asparagine 410, asparagine 422, and asparagine 478 are each glycosylated (N-linked (GlcNAc...) asparagine). The tract at residues 444–480 (KPSTTDDDNNKNNDDGDSEIDSVGKSAVDSSKSNNNS) is disordered. Residues 490–510 (LLIILPTVLFIIVAALVAIFI) traverse the membrane as a helical segment. The Cytoplasmic segment spans residues 511-544 (KTRVSQNSGSKVNKNNNKKDSINVPFQMLDEITT).

Post-translationally, N- and O-glycosylated.

The protein resides in the membrane. This chain is Glycoprotein gp100 (gppA), found in Dictyostelium discoideum (Social amoeba).